A 125-amino-acid chain; its full sequence is Small ribosomal subunit protein uS12m (125 aa).

It belongs to the universal ribosomal protein uS12 family. Component of the mitochondrial ribosome small subunit.

The protein localises to the mitochondrion. Protein S12 is involved in the translation initiation step. The polypeptide is Small ribosomal subunit protein uS12m (RPS12) (Arabidopsis thaliana (Mouse-ear cress)).